Here is a 447-residue protein sequence, read N- to C-terminus: CBL-interacting serine/threonine-protein kinase 9 (447 aa).

Positions 19–274 constitute a Protein kinase domain; the sequence is YEMGRTLGEG…IAELLEDEWF (256 aa). ATP is bound by residues 25-33 and K48; that span reads LGEGSFAKV. The active-site Proton acceptor is D142. The segment at 160–189 is activation loop; that stretch reads DFGLSAFSRQVREDGLLHTACGTPNYVAPE. At S164 the chain carries Phosphoserine. A Phosphothreonine modification is found at T178. Residues 312 to 336 enclose the NAF domain; that stretch reads EKPVSMNAFELISSSSEFSLENLFE. The segment at 343-372 is PPI; the sequence is KKETRFTSQRSASEIMSKMEETAKPLGFNV.

It belongs to the protein kinase superfamily. CAMK Ser/Thr protein kinase family. SNF1 subfamily. In terms of assembly, interacts with CBL2 and CBL3. Mn(2+) serves as cofactor. In terms of tissue distribution, expressed at low levels in roots and shoots. Detected in root vascular bundles and in the leaf vascular tissue and hydathode, but not in root tips.

The protein localises to the cytoplasm. It localises to the nucleus. The enzyme catalyses L-seryl-[protein] + ATP = O-phospho-L-seryl-[protein] + ADP + H(+). It catalyses the reaction L-threonyl-[protein] + ATP = O-phospho-L-threonyl-[protein] + ADP + H(+). Functionally, CIPK serine-threonine protein kinases interact with CBL proteins. Binding of a CBL protein to the regulatory NAF domain of CIPK protein lead to the activation of the kinase in a calcium-dependent manner. Involved in K(+) homeostasis under low-K(+) stress. This is CBL-interacting serine/threonine-protein kinase 9 (CIPK9) from Arabidopsis thaliana (Mouse-ear cress).